The chain runs to 131 residues: Profilin (131 aa).

This sequence belongs to the profilin family. In terms of assembly, occurs in many kinds of cells as a complex with monomeric actin in a 1:1 ratio.

The protein resides in the cytoplasm. It is found in the cytoskeleton. Functionally, binds to actin and affects the structure of the cytoskeleton. At high concentrations, profilin prevents the polymerization of actin, whereas it enhances it at low concentrations. By binding to PIP2, it inhibits the formation of IP3 and DG. The chain is Profilin (PRO1) from Cynodon dactylon (Bermuda grass).